The sequence spans 341 residues: Phosphoribosylformylglycinamidine cyclo-ligase (341 aa).

It belongs to the AIR synthase family.

Its subcellular location is the cytoplasm. The enzyme catalyses 2-formamido-N(1)-(5-O-phospho-beta-D-ribosyl)acetamidine + ATP = 5-amino-1-(5-phospho-beta-D-ribosyl)imidazole + ADP + phosphate + H(+). It participates in purine metabolism; IMP biosynthesis via de novo pathway; 5-amino-1-(5-phospho-D-ribosyl)imidazole from N(2)-formyl-N(1)-(5-phospho-D-ribosyl)glycinamide: step 2/2. The protein is Phosphoribosylformylglycinamidine cyclo-ligase of Agathobacter rectalis (strain ATCC 33656 / DSM 3377 / JCM 17463 / KCTC 5835 / VPI 0990) (Eubacterium rectale).